The following is an 81-amino-acid chain: Short neurotoxin 2 (81 aa).

Residues Met1–Thr21 form the signal peptide. Cystine bridges form between Cys24-Cys43, Cys38-Cys60, Cys62-Cys73, and Cys74-Cys79.

This sequence belongs to the three-finger toxin family. Short-chain subfamily. Type I alpha-neurotoxin sub-subfamily. In terms of tissue distribution, expressed by the venom gland.

It is found in the secreted. Functionally, binds to muscle nicotinic acetylcholine receptor (nAChR) and inhibit acetylcholine from binding to the receptor, thereby impairing neuromuscular transmission. In Drysdalia coronoides (White-lipped snake), this protein is Short neurotoxin 2.